The following is a 502-amino-acid chain: Histidine--tRNA ligase (502 aa).

It belongs to the class-II aminoacyl-tRNA synthetase family. In terms of assembly, homodimer.

It is found in the cytoplasm. It carries out the reaction tRNA(His) + L-histidine + ATP = L-histidyl-tRNA(His) + AMP + diphosphate + H(+). The protein is Histidine--tRNA ligase (hisS) of Brucella suis biovar 1 (strain 1330).